A 384-amino-acid polypeptide reads, in one-letter code: S-adenosylmethionine synthase (384 aa).

Histidine 15 provides a ligand contact to ATP. Aspartate 17 contributes to the Mg(2+) binding site. Glutamate 43 contributes to the K(+) binding site. Residues glutamate 56 and glutamine 99 each coordinate L-methionine. The segment at 99–109 is flexible loop; that stretch reads QSPDINQGVDR. Residues 164-166, 230-231, aspartate 239, 245-246, alanine 262, and lysine 266 each bind ATP; these read DAK, RF, and RK. Aspartate 239 provides a ligand contact to L-methionine. Lysine 270 lines the L-methionine pocket.

This sequence belongs to the AdoMet synthase family. In terms of assembly, homotetramer; dimer of dimers. It depends on Mg(2+) as a cofactor. K(+) serves as cofactor.

It is found in the cytoplasm. It catalyses the reaction L-methionine + ATP + H2O = S-adenosyl-L-methionine + phosphate + diphosphate. The protein operates within amino-acid biosynthesis; S-adenosyl-L-methionine biosynthesis; S-adenosyl-L-methionine from L-methionine: step 1/1. Catalyzes the formation of S-adenosylmethionine (AdoMet) from methionine and ATP. The overall synthetic reaction is composed of two sequential steps, AdoMet formation and the subsequent tripolyphosphate hydrolysis which occurs prior to release of AdoMet from the enzyme. This Salmonella heidelberg (strain SL476) protein is S-adenosylmethionine synthase.